Reading from the N-terminus, the 448-residue chain is Vicilin Cor a 11.0101 (448 aa).

The span at 1-44 shows a compositional bias: basic and acidic residues; it reads MLPKEDPELKKCKHKCRDERQFDEQQRRDGKQICEEKARERQQE. The disordered stretch occupies residues 1 to 66; it reads MLPKEDPELK…QEENPYVFQD (66 aa). A glycan (N-linked (GlcNAc...) asparagine) is linked at N47. Cupin type-1 domains follow at residues 84–220 and 263–418; these read ENFT…EQLE and INLL…REVE. Residue N301 is glycosylated (N-linked (GlcNAc...) asparagine). Residues C333, H335, and H362 each coordinate Cu cation.

The protein belongs to the 7S seed storage protein family. As to quaternary structure, homotrimer. Homohexamer. In terms of processing, N-glycosylated at Asn-301 mostly with xylosylated paucimannosidic-type N-glycan MMX (an N-linked glycan with beta-1,2-xylose residue in the structure) and also with MMXF (a complex N-linked glycan with alpha-1,3-fucose and beta-1,2-xylose residues in the structure). Post-translationally, a mixture of proteolytically processed and unprocessed subunits exist. In terms of tissue distribution, expressed in seed (at protein level). Expressed in seed.

In terms of biological role, seed storage protein. Does not have superoxide dismutase (SOD) activity. The chain is Vicilin Cor a 11.0101 from Corylus avellana (European hazel).